Reading from the N-terminus, the 519-residue chain is Cytosol aminopeptidase (519 aa).

Lys-45 carries the post-translational modification N6-succinyllysine. A Phosphoserine modification is found at Ser-54. Lys-61 and Lys-103 each carry N6-succinyllysine. Residues Ser-180 and Ser-194 each carry the phosphoserine modification. 2 residues coordinate Zn(2+): Leu-202 and Met-203. An N6-acetyllysine; alternate modification is found at Lys-221. An N6-succinyllysine; alternate modification is found at Lys-221. Position 238 is a phosphoserine (Ser-238). The Zn(2+) site is built by Lys-282 and Asp-287. Substrate-binding residues include Lys-282, Asp-287, Ser-292, and Lys-294. Asp-287 lines the Mg(2+) pocket. Lys-294 is an active-site residue. Arg-303, Asp-305, Asp-364, and Glu-366 together coordinate Zn(2+). Residues Asp-305 and Asp-364 each coordinate substrate. Mg(2+) is bound by residues Asp-364 and Glu-366. Residue Arg-368 is part of the active site. Position 455 is an N6-acetyllysine; alternate (Lys-455). Lys-455 carries the N6-succinyllysine; alternate modification. Lys-476 carries the post-translational modification N6-succinyllysine. Lys-489 is modified (N6-acetyllysine; alternate). Lys-489 carries the N6-succinyllysine; alternate modification.

This sequence belongs to the peptidase M17 family. As to quaternary structure, homohexamer. The cofactor is Zn(2+). It depends on Mn(2+) as a cofactor.

It localises to the cytoplasm. The enzyme catalyses Release of an N-terminal amino acid, Xaa-|-Yaa-, in which Xaa is preferably Leu, but may be other amino acids including Pro although not Arg or Lys, and Yaa may be Pro. Amino acid amides and methyl esters are also readily hydrolyzed, but rates on arylamides are exceedingly low.. It carries out the reaction an S-substituted L-cysteinylglycine + H2O = an S-substituted L-cysteine + glycine. It catalyses the reaction L-cysteinylglycine + H2O = L-cysteine + glycine. The catalysed reaction is S-benzyl-L-cysteinylglycine + H2O = S-benzyl-L-cysteine + glycine. The enzyme catalyses Release of N-terminal proline from a peptide.. Its function is as follows. Cytosolic metallopeptidase that catalyzes the removal of unsubstituted N-terminal hydrophobic amino acids from various peptides. The presence of Zn(2+) ions is essential for the peptidase activity, and the association with other cofactors can modulate the substrate spectificity of the enzyme. For instance, in the presence of Mn(2+), it displays a specific Cys-Gly hydrolyzing activity of Cys-Gly-S-conjugates. Involved in the metabolism of glutathione and in the degradation of glutathione S-conjugates, which may play a role in the control of the cell redox status. This is Cytosol aminopeptidase from Mus musculus (Mouse).